The primary structure comprises 217 residues: Flagellar L-ring protein 2 (217 aa).

The N-terminal stretch at 1–15 (MRILLALTWLAWLGA) is a signal peptide. A lipid anchor (N-palmitoyl cysteine) is attached at Cys-16. The S-diacylglycerol cysteine moiety is linked to residue Cys-16.

It belongs to the FlgH family. The basal body constitutes a major portion of the flagellar organelle and consists of four rings (L,P,S, and M) mounted on a central rod.

Its subcellular location is the cell outer membrane. It is found in the bacterial flagellum basal body. Functionally, assembles around the rod to form the L-ring and probably protects the motor/basal body from shearing forces during rotation. This is Flagellar L-ring protein 2 from Burkholderia thailandensis (strain ATCC 700388 / DSM 13276 / CCUG 48851 / CIP 106301 / E264).